The sequence spans 146 residues: D-aminoacyl-tRNA deacylase (146 aa).

A Gly-cisPro motif, important for rejection of L-amino acids motif is present at residues 137-138 (GP).

It belongs to the DTD family. In terms of assembly, homodimer.

It is found in the cytoplasm. It carries out the reaction glycyl-tRNA(Ala) + H2O = tRNA(Ala) + glycine + H(+). The catalysed reaction is a D-aminoacyl-tRNA + H2O = a tRNA + a D-alpha-amino acid + H(+). Functionally, an aminoacyl-tRNA editing enzyme that deacylates mischarged D-aminoacyl-tRNAs. Also deacylates mischarged glycyl-tRNA(Ala), protecting cells against glycine mischarging by AlaRS. Acts via tRNA-based rather than protein-based catalysis; rejects L-amino acids rather than detecting D-amino acids in the active site. By recycling D-aminoacyl-tRNA to D-amino acids and free tRNA molecules, this enzyme counteracts the toxicity associated with the formation of D-aminoacyl-tRNA entities in vivo and helps enforce protein L-homochirality. The chain is D-aminoacyl-tRNA deacylase from Hahella chejuensis (strain KCTC 2396).